The chain runs to 258 residues: Enterotoxin type D (258 aa).

Residues 1–25 (MKKFNILIALLFFTSLVISPLNVKA) form the signal peptide. Zn(2+) is bound by residues D212, H248, H250, and D252.

It belongs to the staphylococcal/streptococcal toxin family. Homodimer; zinc-dependent. Interacts with MHC class II molecules composed of alpha/HLA-DRA and beta/HLA-DRB1 chains. Zn(2+) serves as cofactor.

The protein localises to the secreted. Staphylococcal enterotoxin that activates the host immune system by binding as unprocessed molecules to major histocompatibility (MHC) complex class II and T-cell receptor (TCR) molecules. In turn, this ternary complex activates a large number of T-lymphocytes initiating a systemic release of pro-inflammatory cytokines. In addition, induces B-cell proliferation and differentiation in the presence of T-cells. Causes also the intoxication staphylococcal food poisoning syndrome. In Staphylococcus aureus, this protein is Enterotoxin type D (entD).